The following is a 138-amino-acid chain: Venom allergen 2 (138 aa).

A signal peptide spans 1–19 (MKSFVLATCLLGFAQIIYA). Cystine bridges form between C34-C57, C81-C94, and C101-C122.

Belongs to the ant venom allergen 2/4 family. In terms of assembly, homodimer; disulfide-linked. Expressed by the venom gland.

The protein resides in the secreted. The polypeptide is Venom allergen 2 (Solenopsis invicta (Red imported fire ant)).